The following is a 150-amino-acid chain: uncharacterized protein (150 aa).

This sequence belongs to the aspartate/glutamate racemases family.

This is an uncharacterized protein from Pectobacterium carotovorum subsp. carotovorum (Erwinia carotovora subsp. carotovora).